A 447-amino-acid polypeptide reads, in one-letter code: Phosphoglucosamine mutase (447 aa).

Ser-106 (phosphoserine intermediate) is an active-site residue. Ser-106, Asp-245, Asp-247, and Asp-249 together coordinate Mg(2+). Residue Ser-106 is modified to Phosphoserine.

The protein belongs to the phosphohexose mutase family. Mg(2+) is required as a cofactor. Post-translationally, activated by phosphorylation.

It catalyses the reaction alpha-D-glucosamine 1-phosphate = D-glucosamine 6-phosphate. Catalyzes the conversion of glucosamine-6-phosphate to glucosamine-1-phosphate. The sequence is that of Phosphoglucosamine mutase from Cupriavidus pinatubonensis (strain JMP 134 / LMG 1197) (Cupriavidus necator (strain JMP 134)).